We begin with the raw amino-acid sequence, 95 residues long: uncharacterized protein (95 aa).

Lys-21 contributes to the phosphate binding site. Position 44 (Asp-44) interacts with Mg(2+). Position 47 (Asn-47) interacts with phosphate.

Belongs to the HAD-like hydrolase superfamily. Cof family. Requires Mg(2+) as cofactor.

This is an uncharacterized protein from Geobacillus stearothermophilus (Bacillus stearothermophilus).